The following is a 198-amino-acid chain: Na(+)-translocating NADH-quinone reductase subunit E (198 aa).

Helical transmembrane passes span 11-31 (SIFI…FLAV), 39-59 (FGLG…NNLV), 77-97 (FLSF…LEMI), 110-130 (GIFL…SFMV), 140-160 (VVYG…LAGI), and 176-196 (LGIT…FSGV).

This sequence belongs to the NqrDE/RnfAE family. In terms of assembly, composed of six subunits; NqrA, NqrB, NqrC, NqrD, NqrE and NqrF.

It localises to the cell inner membrane. It carries out the reaction a ubiquinone + n Na(+)(in) + NADH + H(+) = a ubiquinol + n Na(+)(out) + NAD(+). Its function is as follows. NQR complex catalyzes the reduction of ubiquinone-1 to ubiquinol by two successive reactions, coupled with the transport of Na(+) ions from the cytoplasm to the periplasm. NqrA to NqrE are probably involved in the second step, the conversion of ubisemiquinone to ubiquinol. This Aliivibrio fischeri (strain ATCC 700601 / ES114) (Vibrio fischeri) protein is Na(+)-translocating NADH-quinone reductase subunit E.